Reading from the N-terminus, the 90-residue chain is uncharacterized protein (90 aa).

This is an uncharacterized protein from Escherichia coli (strain K12).